The following is a 198-amino-acid chain: Glycerol-3-phosphate acyltransferase (198 aa).

Helical transmembrane passes span 1–21, 53–73, 79–99, 111–131, 136–156, and 158–178; these read MNLLILFFGYLFGSFPSGYLA, IIVFLLDVFKGVLSILLAKYL, WQVAIGLSTLIGHIWPVWLNW, IFLGLSWQVGLATLGVFIIMI, IVSLASVSASLALPLIMFLSF, and GSNISLPFLIVSLLAMLLVIW.

It belongs to the PlsY family. As to quaternary structure, probably interacts with PlsX.

The protein localises to the cell inner membrane. It carries out the reaction an acyl phosphate + sn-glycerol 3-phosphate = a 1-acyl-sn-glycero-3-phosphate + phosphate. It participates in lipid metabolism; phospholipid metabolism. Its function is as follows. Catalyzes the transfer of an acyl group from acyl-phosphate (acyl-PO(4)) to glycerol-3-phosphate (G3P) to form lysophosphatidic acid (LPA). This enzyme utilizes acyl-phosphate as fatty acyl donor, but not acyl-CoA or acyl-ACP. This chain is Glycerol-3-phosphate acyltransferase, found in Prochlorococcus marinus (strain NATL1A).